The sequence spans 294 residues: Nucleophosmin (294 aa).

An N-acetylmethionine modification is found at methionine 1. Residues 1-117 (MEDSMDMDMS…PVHISGQHLV (117 aa)) are necessary for interaction with APEX1. A required for interaction with SENP3 region spans residues 1–187 (MEDSMDMDMS…DDDDDFDEEV (187 aa)). Residue serine 4 is modified to Phosphoserine; by PLK1 and PLK2. Serine 10 carries the post-translational modification Phosphoserine. Lysine 32 carries the post-translational modification N6-acetyllysine; alternate. Residue lysine 32 forms a Glycyl lysine isopeptide (Lys-Gly) (interchain with G-Cter in SUMO1); alternate linkage. Lysine 32 participates in a covalent cross-link: Glycyl lysine isopeptide (Lys-Gly) (interchain with G-Cter in SUMO2); alternate. Residue serine 43 is modified to Phosphoserine. Tyrosine 67 bears the Phosphotyrosine mark. The residue at position 70 (serine 70) is a Phosphoserine. Phosphothreonine is present on residues threonine 75 and threonine 95. The span at 121–132 (EDAESEEEEEEE) shows a compositional bias: acidic residues. The disordered stretch occupies residues 121–249 (EDAESEEEEE…GPSSVEDIKA (129 aa)). The residue at position 125 (serine 125) is a Phosphoserine; by CDK2. 2 positions are modified to phosphoserine: serine 137 and serine 139. Lysine 141 is covalently cross-linked (Glycyl lysine isopeptide (Lys-Gly) (interchain with G-Cter in SUMO2)). At lysine 150 the chain carries N6-acetyllysine; alternate. A Glycyl lysine isopeptide (Lys-Gly) (interchain with G-Cter in SUMO2); alternate cross-link involves residue lysine 150. A Nuclear localization signal motif is present at residues 152–157 (PQKKVK). At lysine 154 the chain carries N6-acetyllysine. Positions 161–188 (DEDEDDDDDDDDDDDEDDDDDDFDEEVE) are enriched in acidic residues. The segment at 188–216 (EEKAPVKKSVRDTPAKNAQKSNQNGKDSK) is interaction with NOP2. Residues 189–201 (EKAPVKKSVRDTP) are compositionally biased toward basic and acidic residues. A Nuclear localization signal motif is present at residues 192 to 198 (PVKKSVR). Residue threonine 200 is modified to Phosphothreonine; by CDK1 and CDK2. Residues 203 to 222 (KNAQKSNQNGKDSKPSTPRS) show a composition bias toward polar residues. Serine 208 is subject to ADP-ribosylserine. Lysine 213 bears the N6-acetyllysine mark. A Glycyl lysine isopeptide (Lys-Gly) (interchain with G-Cter in SUMO2) cross-link involves residue lysine 216. Threonine 219 bears the Phosphothreonine; by CDK1 mark. Basic and acidic residues predominate over residues 223 to 235 (KGQESFKKQEKTP). Serine 227 is subject to Phosphoserine. Lysine 229 carries the N6-acetyllysine modification. An N6-acetyllysine; alternate modification is found at lysine 230. Lysine 230 participates in a covalent cross-link: Glycyl lysine isopeptide (Lys-Gly) (interchain with G-Cter in SUMO); alternate. A phosphothreonine mark is found at threonine 234 and threonine 237. A phosphoserine mark is found at serine 242 and serine 243. A required for nucleolar localization region spans residues 243 to 294 (SVEDIKAKMQASIEKGGSLPKVEAKFINYVKNCFRMTDQEAIQDLWQWRKSL). Lysine 248 participates in a covalent cross-link: Glycyl lysine isopeptide (Lys-Gly) (interchain with G-Cter in SUMO1); alternate. Residues lysine 248 and lysine 250 each participate in a glycyl lysine isopeptide (Lys-Gly) (interchain with G-Cter in SUMO2); alternate cross-link. Residue lysine 250 is modified to N6-acetyllysine; alternate. Serine 254 is modified (phosphoserine). Lysine 257 is modified (N6-acetyllysine; alternate). Lysine 257 is covalently cross-linked (Glycyl lysine isopeptide (Lys-Gly) (interchain with G-Cter in SUMO1); alternate). Lysine 257 is covalently cross-linked (Glycyl lysine isopeptide (Lys-Gly) (interchain with G-Cter in SUMO2); alternate). A Phosphoserine modification is found at serine 260. Residues lysine 263, lysine 267, and lysine 273 each participate in a glycyl lysine isopeptide (Lys-Gly) (interchain with G-Cter in SUMO2); alternate cross-link. A Glycyl lysine isopeptide (Lys-Gly) (interchain with G-Cter in SUMO); alternate cross-link involves residue lysine 263. An N6-acetyllysine; alternate mark is found at lysine 267 and lysine 273. Lysine 267 is covalently cross-linked (Glycyl lysine isopeptide (Lys-Gly) (interchain with G-Cter in SUMO1); alternate). Lysine 267 carries the post-translational modification N6-succinyllysine; alternate. The residue at position 279 (threonine 279) is a Phosphothreonine. Lysine 292 is modified (N6-acetyllysine).

It belongs to the nucleoplasmin family. In terms of assembly, decamer formed by two pentameric rings associated in a head-to-head fashion. Disulfide-linked dimers under certain conditions. The SWAP complex consists of NPM1, NCL, PARP1 and SWAP70. Interacts with NSUN2 and SENP3. Interacts with the methylated form of RPS10. Interacts (via N-terminal domain) with APEX1; the interaction is RNA-dependent and decreases in hydrogen peroxide-damaged cells. Interacts with isoform 1 of NEK2. Interacts with ROCK2 and BRCA2. Interacts with RPGR. Interacts with CENPW. Interacts with EIF2AK2/PKR. Interacts with CEBPA (isoform 4). Interacts with DDX31; this interaction prevents interaction between NPM1 and HDM2. Interacts with MYC; competitive with NOP53. Interacts with NOP53; the interaction is direct and competitive with MYC. Interacts with LRRC34. Interacts with RRP1B. Interacts with NPM3. Interacts with ALKBH2. Interacts with TTF1 (via C-terminal region). Interacts with NOP2. Interacts with ARID3C (via REKLES DOMAIN); the interaction mediates ARID3C nuclear shuttling. Acetylated at C-terminal lysine residues, thereby increasing affinity to histones. Post-translationally, ADP-ribosylated. In terms of processing, phosphorylated at Ser-4 by PLK1 and PLK2. Phosphorylation at Ser-4 by PLK2 in S phase is required for centriole duplication and is sufficient to trigger centriole replication. Phosphorylation at Ser-4 by PLK1 takes place during mitosis. Phosphorylated by CDK2 at Ser-125 and Thr-200. Phosphorylation at Thr-200 may trigger initiation of centrosome duplication. Phosphorylated by CDK1 at Thr-200, Thr-219, Thr-234 and Thr-237 during cell mitosis. When these four sites are phosphorated, RNA-binding activity seem to be abolished. May be phosphorylated at Ser-70 by NEK2. The Thr-200 phosphorylated form has higher affinity for ROCK2. Sumoylated by ARF. Post-translationally, may be ubiquitinated. Ubiquitination leads to proteasomal degradation. Deubiquitinated by USP36.

It localises to the nucleus. Its subcellular location is the nucleolus. The protein localises to the nucleoplasm. The protein resides in the cytoplasm. It is found in the cytoskeleton. It localises to the microtubule organizing center. Its subcellular location is the centrosome. Involved in diverse cellular processes such as ribosome biogenesis, centrosome duplication, protein chaperoning, histone assembly, cell proliferation, and regulation of tumor suppressors p53/TP53 and ARF. Binds ribosome presumably to drive ribosome nuclear export. Associated with nucleolar ribonucleoprotein structures and bind single-stranded nucleic acids. Acts as a chaperonin for the core histones H3, H2B and H4. Stimulates APEX1 endonuclease activity on apurinic/apyrimidinic (AP) double-stranded DNA but inhibits APEX1 endonuclease activity on AP single-stranded RNA. May exert a control of APEX1 endonuclease activity within nucleoli devoted to repair AP on rDNA and the removal of oxidized rRNA molecules. In concert with BRCA2, regulates centrosome duplication. Regulates centriole duplication: phosphorylation by PLK2 is able to trigger centriole replication. Negatively regulates the activation of EIF2AK2/PKR and suppresses apoptosis through inhibition of EIF2AK2/PKR autophosphorylation. Antagonizes the inhibitory effect of ATF5 on cell proliferation and relieves ATF5-induced G2/M blockade. In complex with MYC enhances the transcription of MYC target genes. May act as chaperonin or cotransporter in the nucleolar localization of transcription termination factor TTF1. The sequence is that of Nucleophosmin (NPM1) from Bos taurus (Bovine).